Consider the following 447-residue polypeptide: UDP-glycosyltransferase 76B1 (447 aa).

UDP-alpha-D-glucose is bound by residues S269, 327 to 328 (WA), 345 to 353 (HCGWNSTLE), and 367 to 370 (FGDQ).

It belongs to the UDP-glycosyltransferase family. Expressed in roots, leaves, hydathodes, sepals and style.

In terms of biological role, glycosylates the amino acid-related molecules isoleucic acid (2-hydroxy-3-methylpentanoic acid) and valic acid (2-hydroxy-3-methylbutyric acid). Acts as a negative regulator of salicylic acid (SA)-dependent plant defense in the absence of pathogens and promotes the jasmonate (JA) response. Negatively influences the onset of senescence. This is UDP-glycosyltransferase 76B1 from Arabidopsis thaliana (Mouse-ear cress).